The sequence spans 151 residues: uncharacterized protein (151 aa).

A disordered region spans residues 1–77 (MSLLGGMWKS…LGSNPISSSR (77 aa)). Low complexity-rich tracts occupy residues 19–54 (PKPS…RSSN) and 63–76 (SISG…ISSS).

This is an uncharacterized protein from Methanothermobacter marburgensis (strain ATCC BAA-927 / DSM 2133 / JCM 14651 / NBRC 100331 / OCM 82 / Marburg) (Methanobacterium thermoautotrophicum).